Reading from the N-terminus, the 177-residue chain is Large ribosomal subunit protein uL6 (177 aa).

This sequence belongs to the universal ribosomal protein uL6 family. Part of the 50S ribosomal subunit.

Functionally, this protein binds to the 23S rRNA, and is important in its secondary structure. It is located near the subunit interface in the base of the L7/L12 stalk, and near the tRNA binding site of the peptidyltransferase center. In Azorhizobium caulinodans (strain ATCC 43989 / DSM 5975 / JCM 20966 / LMG 6465 / NBRC 14845 / NCIMB 13405 / ORS 571), this protein is Large ribosomal subunit protein uL6.